Here is a 190-residue protein sequence, read N- to C-terminus: Protein LZIC (190 aa).

Positions 2–63 (ASRGKTETSK…SEFNDSLKKI (62 aa)) form a coiled coil.

The protein belongs to the CTNNBIP1 family. In terms of assembly, does not interact with CTNNB1.

The polypeptide is Protein LZIC (Lzic) (Rattus norvegicus (Rat)).